Consider the following 655-residue polypeptide: Spastin (655 aa).

The Cytoplasmic portion of the chain corresponds to 1–58; sequence MLFDLINSFLKNGINNSNNNNNNNNNKNNFYNSLEDDDYLLNNQTTKVSLYLYFFIFA. An intramembrane region (helical) is located at residues 59 to 79; the sequence is FMFLVVDLIMLYYKHRENIES. The Cytoplasmic segment spans residues 80–655; that stretch reads RETDLSLKLN…EKWNQKFGTI (576 aa). Positions 102–140 are enriched in low complexity; that stretch reads KSSPTTSTTTTTITPTTTSSSQLRQPSTPKTTTKTINSP. The tract at residues 102 to 151 is disordered; that stretch reads KSSPTTSTTTTTITPTTTSSSQLRQPSTPKTTTKTINSPPSTPKSPPPLP. Residues 141–151 are compositionally biased toward pro residues; the sequence is PSTPKSPPPLP. The 64-residue stretch at 169–232 folds into the MIT domain; the sequence is LNEAKSQIDS…KRAEYLKNEL (64 aa). The disordered stretch occupies residues 261–325; that stretch reads EQQQQQQQQS…TITSPGNKYG (65 aa). A compositionally biased stretch (low complexity) spans 262–320; sequence QQQQQQQQSSSTYRNSLNLSSSKSNSTINNRHSISSLSSLNSTTATTTTPSNTSTITSP. ATP is bound at residue 424 to 431; sequence GPPGNGKT.

Belongs to the AAA ATPase family. Spastin subfamily. In terms of assembly, homohexamer. The homohexamer is stabilized by ATP-binding. The homohexamer may adopt a ring conformation through which microtubules pass prior to being severed. Interacts with microtubules.

It localises to the membrane. Its subcellular location is the cytoplasm. The protein resides in the cytoskeleton. It is found in the microtubule organizing center. The protein localises to the centrosome. It catalyses the reaction n ATP + n H2O + a microtubule = n ADP + n phosphate + (n+1) alpha/beta tubulin heterodimers.. ATP-dependent microtubule severing protein. Microtubule severing may promote reorganization of cellular microtubule arrays and the release of microtubules from the microtubule organizing center following nucleation. The protein is Spastin of Dictyostelium discoideum (Social amoeba).